A 226-amino-acid polypeptide reads, in one-letter code: Ribonuclease 3 (226 aa).

The RNase III domain maps to Thr-6 to Asp-128. Mg(2+) is bound at residue Glu-41. The active site involves Asp-45. Positions 114 and 117 each coordinate Mg(2+). Residue Glu-117 is part of the active site. Positions Asp-155–Leu-225 constitute a DRBM domain.

The protein belongs to the ribonuclease III family. Homodimer. Mg(2+) serves as cofactor.

It localises to the cytoplasm. The enzyme catalyses Endonucleolytic cleavage to 5'-phosphomonoester.. In terms of biological role, digests double-stranded RNA. Involved in the processing of primary rRNA transcript to yield the immediate precursors to the large and small rRNAs (23S and 16S). Processes some mRNAs, and tRNAs when they are encoded in the rRNA operon. Processes pre-crRNA and tracrRNA of type II CRISPR loci if present in the organism. The chain is Ribonuclease 3 from Sodalis glossinidius (strain morsitans).